A 1074-amino-acid chain; its full sequence is Formin-G (1074 aa).

The region spanning 34-423 is the GBD/FH3 domain; that stretch reads LQMQQGSKTY…DKINEFEKKI (390 aa). Disordered stretches follow at residues 476–507 and 549–639; these read QSISPSQDSSNNQKASSSSSNTSTLNDSDIQS and FTPT…NPSS. The span at 481-503 shows a compositional bias: low complexity; the sequence is SQDSSNNQKASSSSSNTSTLNDS. Residues 502 to 530 adopt a coiled-coil conformation; it reads DSDIQSIQSSLKEATLEIERLKLAIEEKM. Polar residues predominate over residues 549 to 561; that stretch reads FTPTSPDISNDGQ. The span at 568–610 shows a compositional bias: pro residues; sequence APPPSPSPPPPISGGGAPPPPPPPPPPPSGGGAPPPPPPPPPS. The 27-residue stretch at 597 to 623 folds into the FH1 domain; it reads GGGAPPPPPPPPPSGGKKAGAPGAPPT. In terms of domain architecture, FH2 spans 631–1031; it reads NKPVINPSSK…ASGDNGAVQN (401 aa). Residues 914–971 are a coiled coil; sequence DINDLEKQFNISKNNCKKVLEANIPSSSKFQSTIGSFLEKTEIDIKNLKENQKNIVDS. A DAD domain is found at 1037-1073; it reads GADPLAALANAIKLGQTGLRKRPGPENSSGGSQLNLN. The disordered stretch occupies residues 1053–1074; sequence TGLRKRPGPENSSGGSQLNLNK. The segment covering 1062 to 1074 has biased composition (polar residues); that stretch reads ENSSGGSQLNLNK.

The protein belongs to the formin homology family. Diaphanous subfamily. As to quaternary structure, interacts (via GBD/FH3 domain) with activated Rho-GTPases.

Formins play an important role in the nucleation of actin and the formation of linear actin filaments. This Dictyostelium discoideum (Social amoeba) protein is Formin-G (forG).